Reading from the N-terminus, the 137-residue chain is ATP synthase epsilon chain (137 aa).

It belongs to the ATPase epsilon chain family. As to quaternary structure, F-type ATPases have 2 components, CF(1) - the catalytic core - and CF(0) - the membrane proton channel. CF(1) has five subunits: alpha(3), beta(3), gamma(1), delta(1), epsilon(1). CF(0) has three main subunits: a, b and c.

It is found in the cell inner membrane. Functionally, produces ATP from ADP in the presence of a proton gradient across the membrane. This chain is ATP synthase epsilon chain, found in Yersinia pestis bv. Antiqua (strain Antiqua).